A 300-amino-acid chain; its full sequence is Energy-coupling factor transporter ATP-binding protein EcfA2 (300 aa).

One can recognise an ABC transporter domain in the interval 3–258 (IKAKNIVKIY…NKFLIENKML (256 aa)). ATP is bound at residue 40 to 47 (GQTGSGKT).

Belongs to the ABC transporter superfamily. Energy-coupling factor EcfA family. In terms of assembly, forms a stable energy-coupling factor (ECF) transporter complex composed of 2 membrane-embedded substrate-binding proteins (S component), 2 ATP-binding proteins (A component) and 2 transmembrane proteins (T component).

The protein resides in the cell membrane. ATP-binding (A) component of a common energy-coupling factor (ECF) ABC-transporter complex. Unlike classic ABC transporters this ECF transporter provides the energy necessary to transport a number of different substrates. This chain is Energy-coupling factor transporter ATP-binding protein EcfA2, found in Mesomycoplasma hyopneumoniae (strain 7448) (Mycoplasma hyopneumoniae).